The primary structure comprises 191 residues: MSETTLPDYLTVATELQSASLAVNPAEMHGLLTGMLSGGLNLADKSWQPLIFDYTNEGMGWPDRALTLAEATLKVTTSEITGSGMELSMLLPDEDASASLFDLADGVSDWINHFISGLGLVGAQLNKASDGTKEALADLEEMAKLGIDEDDDMEEQAQLLEHVIEHVKACALTIHAEFGARPSEDAAPTIH.

The protein belongs to the UPF0149 family.

This Vibrio atlanticus (strain LGP32) (Vibrio splendidus (strain Mel32)) protein is UPF0149 protein VS_2635.